The sequence spans 344 residues: S-adenosylmethionine:tRNA ribosyltransferase-isomerase (344 aa).

The protein belongs to the QueA family. Monomer.

It is found in the cytoplasm. It catalyses the reaction 7-aminomethyl-7-carbaguanosine(34) in tRNA + S-adenosyl-L-methionine = epoxyqueuosine(34) in tRNA + adenine + L-methionine + 2 H(+). It functions in the pathway tRNA modification; tRNA-queuosine biosynthesis. Functionally, transfers and isomerizes the ribose moiety from AdoMet to the 7-aminomethyl group of 7-deazaguanine (preQ1-tRNA) to give epoxyqueuosine (oQ-tRNA). The chain is S-adenosylmethionine:tRNA ribosyltransferase-isomerase from Heliobacterium modesticaldum (strain ATCC 51547 / Ice1).